A 264-amino-acid chain; its full sequence is Elongation factor Ts (264 aa).

The involved in Mg(2+) ion dislocation from EF-Tu stretch occupies residues 76–79 (TDFV).

This sequence belongs to the EF-Ts family.

The protein resides in the cytoplasm. Associates with the EF-Tu.GDP complex and induces the exchange of GDP to GTP. It remains bound to the aminoacyl-tRNA.EF-Tu.GTP complex up to the GTP hydrolysis stage on the ribosome. This Deinococcus radiodurans (strain ATCC 13939 / DSM 20539 / JCM 16871 / CCUG 27074 / LMG 4051 / NBRC 15346 / NCIMB 9279 / VKM B-1422 / R1) protein is Elongation factor Ts.